A 442-amino-acid polypeptide reads, in one-letter code: Yes-associated protein homolog 1 (442 aa).

Over residues 1–10 the composition is skewed to basic residues; that stretch reads MASKSIHKKH. The interval 1–84 is disordered; sequence MASKSIHKKH…GSVDESSRTA (84 aa). 2 stretches are compositionally biased toward polar residues: residues 13-22 and 55-71; these read NSQQDKNQFS and LPSS…SSAH. S104 bears the Phosphoserine mark. The segment covering 108–120 has biased composition (polar residues); sequence LHTSVNNGQSSAT. Residues 108 to 136 form a disordered region; the sequence is LHTSVNNGQSSATVPHPSHHNVHHQHSKS. The span at 124–134 shows a compositional bias: basic residues; the sequence is PSHHNVHHQHS. The 34-residue stretch at 203 to 236 folds into the WW domain; sequence LPMPQGWEMCYDSDGVRYFKDHNSKTTTWDDPRL.

Belongs to the YAP1 family. Highly divergent. In terms of assembly, interacts (via WW domain) with wts-1 (via N-terminus). Interacts (via WW domain) with egl-44; the interaction may regulate transcription. As to expression, expressed in epithelia, hypodermis, muscles, pharynx, intestine, gonadal sheath cells, vulva, spermatheca and in excretory tissue.

Its subcellular location is the cytoplasm. It localises to the nucleus. It is found in the cell projection. The protein localises to the cilium. The protein resides in the cytoskeleton. Its subcellular location is the cilium axoneme. Its function is as follows. Plays a role in thermal stress response and in aging. The sequence is that of Yes-associated protein homolog 1 from Caenorhabditis elegans.